Consider the following 360-residue polypeptide: Teichoic acids export ATP-binding protein TagH (360 aa).

The region spanning 24-245 (LKAMFFPKTR…YEDYINWFNK (222 aa)) is the ABC transporter domain. Residue 59-66 (GINGSGKS) participates in ATP binding. Residues 246-360 (LSKEEKEAHK…GDIDNSDVSL (115 aa)) form a unknown region. The interval 270-290 (EEQENGKAGSGGDGTQPIVQP) is disordered.

It belongs to the ABC transporter superfamily. Teichoic acids exporter (TC 3.A.1.104.1) family. In terms of assembly, the complex is composed of two ATP-binding proteins (TagH) and two transmembrane proteins (TagG).

The protein resides in the cell membrane. The enzyme catalyses ATP + H2O + teichoic acidSide 1 = ADP + phosphate + teichoic acidSide 2.. Its function is as follows. Part of the ABC transporter complex TagGH involved in teichoic acids export. Responsible for energy coupling to the transport system. In Shouchella clausii (strain KSM-K16) (Alkalihalobacillus clausii), this protein is Teichoic acids export ATP-binding protein TagH.